The sequence spans 1863 residues: Breast cancer type 1 susceptibility protein (1863 aa).

N-acetylmethionine is present on Met-1. The RING-type zinc-finger motif lies at 24 to 65 (CPICLELIKEPVSTKCDHIFCKFCMLKLLNQKKGPSQCPLCK). A Glycyl lysine isopeptide (Lys-Gly) (interchain with G-Cter in SUMO2) cross-link involves residue Lys-109. Residue Ser-114 is modified to Phosphoserine. A disordered region spans residues 230-270 (ETDVTNTEHHQPSNNDLNTTEKRAAERHPEKYQGSSVSNLH). A compositionally biased stretch (basic and acidic residues) spans 248–260 (TTEKRAAERHPEK). Lys-301 participates in a covalent cross-link: Glycyl lysine isopeptide (Lys-Gly) (interchain with G-Cter in SUMO2). Residues 306-338 (NKSKQPGLARSQHNRWAGSKETCNDRRTPSTEK) are disordered. Residues 327–338 (TCNDRRTPSTEK) are compositionally biased toward basic and acidic residues. Lys-339 is covalently cross-linked (Glycyl lysine isopeptide (Lys-Gly) (interchain with G-Cter in SUMO2)). Phosphoserine is present on residues Ser-395, Ser-398, Ser-423, and Ser-434. Residues Lys-443, Lys-459, and Lys-519 each participate in a glycyl lysine isopeptide (Lys-Gly) (interchain with G-Cter in SUMO2) cross-link. Positions 534 to 544 (QGTNQTEQNGQ) are enriched in low complexity. The interval 534–570 (QGTNQTEQNGQVMNITNSGHENKTKGDSIQNEKNPNP) is disordered. Residue Ser-551 is modified to Phosphoserine. Residues Lys-583 and Lys-654 each participate in a glycyl lysine isopeptide (Lys-Gly) (interchain with G-Cter in SUMO2) cross-link. Residues 654 to 709 (KYNQMPVRHSRNLQLMEGKEPATGAKKSNKPNEQTSKRHDSDTFPELKLTNAPGSF) are disordered. 3 positions are modified to phosphoserine: Ser-694, Ser-708, and Ser-725. Glycyl lysine isopeptide (Lys-Gly) (interchain with G-Cter in SUMO2) cross-links involve residues Lys-734 and Lys-739. 2 positions are modified to phosphoserine: Ser-753 and Ser-840. Glycyl lysine isopeptide (Lys-Gly) (interchain with G-Cter in SUMO2) cross-links involve residues Lys-918 and Lys-987. Ser-988 carries the post-translational modification Phosphoserine; by CHEK2. Ser-1009 carries the phosphoserine modification. Lys-1079 participates in a covalent cross-link: Glycyl lysine isopeptide (Lys-Gly) (interchain with G-Cter in SUMO2). At Ser-1143 the chain carries Phosphoserine; by ATR; in vitro. The segment at 1181–1216 (VQKGELSRSPSPFTHTHLAQGYRRGAKKLESSEENL) is disordered. A phosphoserine mark is found at Ser-1189, Ser-1191, Ser-1211, Ser-1217, and Ser-1218. At Ser-1280 the chain carries Phosphoserine; by ATR; in vitro. Positions 1322 to 1387 (KQMRHQSESQ…VSEDCSGLSS (66 aa)) are disordered. A phosphoserine mark is found at Ser-1328, Ser-1336, and Ser-1342. Over residues 1373-1387 (ESETSVSEDCSGLSS) the composition is skewed to polar residues. Ser-1387 is modified (phosphoserine; by ATM and ATR). Thr-1394 carries the post-translational modification Phosphothreonine; by ATR; in vitro. Residues 1397–1424 (RDTMQHNLIKLQQEMAELEAVLEQHGSQ) form an interaction with PALB2 region. Ser-1423 carries the phosphoserine; by ATM and ATR modification. A disordered region spans residues 1440-1505 (EDLRNPEQST…SSPSKCPSLD (66 aa)). The segment covering 1445–1470 (PEQSTSEKAVLTSQKSSEYPISQNPE) has biased composition (polar residues). Ser-1457 carries the post-translational modification Phosphoserine; by ATR; in vitro. Ser-1524 is modified (phosphoserine; by ATM). The residue at position 1542 (Ser-1542) is a Phosphoserine. The disordered stretch occupies residues 1565–1596 (ESGISLFSDDPESDPSEDRAPESARVGNIPSS). 2 consecutive BRCT domains span residues 1642-1736 (STER…DFEV) and 1756-1855 (QDRK…TYLI).

Heterodimer with BARD1. Part of the BRCA1-associated genome surveillance complex (BASC), which contains BRCA1, MSH2, MSH6, MLH1, ATM, BLM, PMS2 and the MRE11-RAD50-NBN protein (MRN) complex. This association could be a dynamic process changing throughout the cell cycle and within subnuclear domains. Component of the BRCA1-A complex, at least composed of BRCA1, BARD1, UIMC1/RAP80, ABRAXAS1, BRCC3/BRCC36, BABAM2 and BABAM1/NBA1. Interacts (via the BRCT domains) with ABRAXAS1 (phosphorylated form); this is important for recruitment to sites of DNA damage. Can form a heterotetramer with two molecules of ABRAXAS1 (phosphorylated form). Component of the BRCA1-RBBP8 complex. Interacts (via the BRCT domains) with RBBP8 ('Ser-327' phosphorylated form); the interaction ubiquitinates RBBP8, regulates CHEK1 activation, and involves RBBP8 in BRCA1-dependent G2/M checkpoint control on DNA damage. Associates with RNA polymerase II holoenzyme. Interacts with SMC1A, NELFB, DCLRE1C, CLSPN. Interacts with CHEK1, CHEK2, BAP1, BRCC3, UBXN1 and PCLAF. Interacts (via BRCT domains) with BRIP1 (phosphorylated form). Interacts with FANCD2 (ubiquitinated form). Interacts with H2AX (phosphorylated on 'Ser-140'). Interacts (via the BRCT domains) with ACACA (phosphorylated form); the interaction prevents dephosphorylation of ACACA. Part of a BRCA complex containing BRCA1, BRCA2 and PALB2. Interacts directly with PALB2; the interaction is essential for its function in HRR. Interacts directly with BRCA2; the interaction occurs only in the presence of PALB2 which serves as the bridging protein. Interacts (via the BRCT domains) with LMO4; the interaction represses the transcriptional activity of BRCA1. Interacts (via the BRCT domains) with CCAR2 (via N-terminus); the interaction represses the transcriptional activator activity of BRCA1. Interacts with EXD2. Interacts (via C-terminus) with DHX9; this interaction is direct and links BRCA1 to the RNA polymerase II holoenzyme. Interacts with DNA helicase ZGRF1; the interaction is increased following DNA damage induction. Post-translationally, phosphorylated in response to IR, UV, and various stimuli that cause checkpoint activation, probably by ATM or ATR. Phosphorylation at Ser-988 by CHEK2 regulates mitotic spindle assembly. Phosphorylation by AURKA regulates centrosomal microtubule nucleation. In terms of processing, autoubiquitinated, undergoes 'Lys-6'-linked polyubiquitination. 'Lys-6'-linked polyubiquitination does not promote degradation. Isoform 1 and isoform 3 are widely expressed. Isoform 3 is reduced or absent in several breast and ovarian cancer cell lines.

Its subcellular location is the nucleus. It is found in the chromosome. The protein resides in the cytoplasm. It catalyses the reaction S-ubiquitinyl-[E2 ubiquitin-conjugating enzyme]-L-cysteine + [acceptor protein]-L-lysine = [E2 ubiquitin-conjugating enzyme]-L-cysteine + N(6)-ubiquitinyl-[acceptor protein]-L-lysine.. The protein operates within protein modification; protein ubiquitination. With respect to regulation, the E3 ubiquitin-protein ligase activity is inhibited by phosphorylation by AURKA. Activity is increased by phosphatase treatment. In terms of biological role, E3 ubiquitin-protein ligase that specifically mediates the formation of 'Lys-6'-linked polyubiquitin chains and plays a central role in DNA repair by facilitating cellular responses to DNA damage. It is unclear whether it also mediates the formation of other types of polyubiquitin chains. The BRCA1-BARD1 heterodimer coordinates a diverse range of cellular pathways such as DNA damage repair, ubiquitination and transcriptional regulation to maintain genomic stability. Regulates centrosomal microtubule nucleation. Required for appropriate cell cycle arrests after ionizing irradiation in both the S-phase and the G2 phase of the cell cycle. Required for FANCD2 targeting to sites of DNA damage. Inhibits lipid synthesis by binding to inactive phosphorylated ACACA and preventing its dephosphorylation. Contributes to homologous recombination repair (HRR) via its direct interaction with PALB2, fine-tunes recombinational repair partly through its modulatory role in the PALB2-dependent loading of BRCA2-RAD51 repair machinery at DNA breaks. Component of the BRCA1-RBBP8 complex which regulates CHEK1 activation and controls cell cycle G2/M checkpoints on DNA damage via BRCA1-mediated ubiquitination of RBBP8. Acts as a transcriptional activator. The chain is Breast cancer type 1 susceptibility protein (BRCA1) from Homo sapiens (Human).